The sequence spans 394 residues: Elongation factor Tu 1 (394 aa).

Positions 10–204 constitute a tr-type G domain; that stretch reads KPHVNVGTIG…YLDSYIPEPE (195 aa). Positions 19–26 are G1; the sequence is GHVDHGKT. GTP is bound at residue 19-26; it reads GHVDHGKT. Threonine 26 lines the Mg(2+) pocket. Residues 60–64 form a G2 region; that stretch reads GITIN. The segment at 81-84 is G3; that stretch reads DCPG. GTP contacts are provided by residues 81–85 and 136–139; these read DCPGH and NKCD. The segment at 136 to 139 is G4; the sequence is NKCD. The interval 174–176 is G5; it reads SAL.

It belongs to the TRAFAC class translation factor GTPase superfamily. Classic translation factor GTPase family. EF-Tu/EF-1A subfamily. As to quaternary structure, monomer.

It is found in the cytoplasm. It catalyses the reaction GTP + H2O = GDP + phosphate + H(+). In terms of biological role, GTP hydrolase that promotes the GTP-dependent binding of aminoacyl-tRNA to the A-site of ribosomes during protein biosynthesis. The chain is Elongation factor Tu 1 from Serratia proteamaculans (strain 568).